The chain runs to 456 residues: Argininosuccinate lyase (456 aa).

It belongs to the lyase 1 family. Argininosuccinate lyase subfamily.

It is found in the cytoplasm. The catalysed reaction is 2-(N(omega)-L-arginino)succinate = fumarate + L-arginine. Its pathway is amino-acid biosynthesis; L-arginine biosynthesis; L-arginine from L-ornithine and carbamoyl phosphate: step 3/3. The protein is Argininosuccinate lyase of Shewanella pealeana (strain ATCC 700345 / ANG-SQ1).